A 74-amino-acid polypeptide reads, in one-letter code: MKTATVFVLVALIFMTMTTAWALSNPKEKPGACPKPPPRSFGTCDERCTGDGSCSGNMKCCSNGCGHACKPPVF.

Positions 1–24 are cleaved as a signal peptide; sequence MKTATVFVLVALIFMTMTTAWALS. The region spanning 26–73 is the WAP domain; the sequence is PKEKPGACPKPPPRSFGTCDERCTGDGSCSGNMKCCSNGCGHACKPPV.

The protein resides in the secreted. Functionally, could have proteinase inhibiting capacity. This chain is WAP four-disulfide core domain protein 18 (WFDC18), found in Bos taurus (Bovine).